A 238-amino-acid chain; its full sequence is Opacity protein opA66 (238 aa).

Residue alanine 1 is a signal peptide. 2 disordered regions span residues 88–109 (NLQR…QENG) and 162–183 (GARG…AHQE). Residues 168–183 (PTVSSPYKNTQDAHQE) show a composition bias toward polar residues.

This sequence belongs to the opacity porin family.

Its subcellular location is the cell outer membrane. In terms of biological role, implicated in a number of adherence functions. OPA proteins are implicated in pathogenesis and are subject to phase variation. The protein is Opacity protein opA66 of Neisseria gonorrhoeae.